Consider the following 500-residue polypeptide: Serine/threonine protein phosphatase 2A 57 kDa regulatory subunit B' kappa isoform (500 aa).

The tract at residues M1 to R53 is disordered. The segment covering L21 to G37 has biased composition (polar residues).

Belongs to the phosphatase 2A regulatory subunit B56 family. As to quaternary structure, PP2A consists of a common heteromeric enzyme, composed of a catalytic subunit (subunits C), a constant regulatory subunit (subunit A), and a variety of regulatory subunits such as subunits B (the R2/B/PR55/B55, R3/B''/PR72/PR130/PR59 and R5/B'/B56 families).

It localises to the cytoplasm. Functionally, the B regulatory subunit may modulate substrate selectivity and catalytic activity, and may also direct the localization of the catalytic enzyme to a particular subcellular compartment. The sequence is that of Serine/threonine protein phosphatase 2A 57 kDa regulatory subunit B' kappa isoform (B'KAPPA) from Arabidopsis thaliana (Mouse-ear cress).